A 136-amino-acid polypeptide reads, in one-letter code: Histone H2A (136 aa).

Residues methionine 1 to alanine 11 show a composition bias toward gly residues. The tract at residues methionine 1 to lysine 23 is disordered. 2 positions are modified to N6-acetyllysine: lysine 5 and lysine 10. Position 107 is an N5-methylglutamine (glutamine 107). The residue at position 133 (serine 133) is a Phosphoserine. The short motif at serine 133 to glutamine 134 is the [ST]-Q motif element.

Belongs to the histone H2A family. The nucleosome is a histone octamer containing two molecules each of H2A, H2B, H3 and H4 assembled in one H3-H4 heterotetramer and two H2A-H2B heterodimers. The octamer wraps approximately 147 bp of DNA. In terms of processing, phosphorylated to form H2AS128ph (gamma-H2A) in response to DNA double-strand breaks (DSBs) generated by exogenous genotoxic agents and by stalled replication forks. Phosphorylation is dependent on the DNA damage checkpoint kinases MEC1/ATR and TEL1/ATM, spreads on either side of a detected DSB site and may mark the surrounding chromatin for recruitment of proteins required for DNA damage signaling and repair. Gamma-H2A is removed from the DNA prior to the strand invasion-primer extension step of the repair process and subsequently dephosphorylated. Dephosphorylation is necessary for efficient recovery from the DNA damage checkpoint. Acetylated by ESA1 to form H2AK4ac and H2AK7ac.

The protein resides in the nucleus. It is found in the chromosome. Its function is as follows. Core component of nucleosome which plays a central role in DNA double strand break (DSB) repair. Nucleosomes wrap and compact DNA into chromatin, limiting DNA accessibility to the cellular machineries which require DNA as a template. Histones thereby play a central role in transcription regulation, DNA repair, DNA replication and chromosomal stability. DNA accessibility is regulated via a complex set of post-translational modifications of histones, also called histone code, and nucleosome remodeling. The polypeptide is Histone H2A (hta1) (Botryotinia fuckeliana (strain B05.10) (Noble rot fungus)).